Reading from the N-terminus, the 500-residue chain is Aldehyde dehydrogenase, mitochondrial (500 aa).

N6-acetyllysine is present on residues K35, K56, K61, and K142. 245 to 250 (GSTEVG) serves as a coordination point for NAD(+). E268 functions as the Proton acceptor in the catalytic mechanism. C302 serves as the catalytic Nucleophile. An N6-acetyllysine mark is found at K351, K358, K366, K390, K409, K411, K424, and K434.

Belongs to the aldehyde dehydrogenase family. As to quaternary structure, homotetramer. In response to mitochondrial stress, the precursor protein is ubiquitinated by the SIFI complex in the cytoplasm before mitochondrial import, leading to its degradation. Within the SIFI complex, UBR4 initiates ubiquitin chain that are further elongated or branched by KCMF1.

Its subcellular location is the mitochondrion matrix. The catalysed reaction is an aldehyde + NAD(+) + H2O = a carboxylate + NADH + 2 H(+). It functions in the pathway alcohol metabolism; ethanol degradation; acetate from ethanol: step 2/2. Required for clearance of cellular formaldehyde, a cytotoxic and carcinogenic metabolite that induces DNA damage. The chain is Aldehyde dehydrogenase, mitochondrial (ALDH2) from Mesocricetus auratus (Golden hamster).